The chain runs to 721 residues: Protein mu-NS (721 aa).

Residues Met1–Pro13 form an interaction with sigma-NS region. Residues Met1–Pro38 form an RNA-binding region. An interaction with mu-2 region spans residues Val14–Asp40. The segment at Thr17–Ser37 is disordered. The interval Gln471–Leu721 is involved in the formation of factory-like inclusions. Coiled coils occupy residues Leu523–Lys556 and Lys632–Gln686.

This sequence belongs to the orthoreovirus mu-NS protein family. As to quaternary structure, interacts with mu-2. Interacts with sigma-NS; in viral factories. Interacts with the inner capsid proteins lambda-1 and sigma-2, and outer capsid protein lambda-2; in viral factories. In terms of processing, the N-terminus is blocked.

It is found in the host cytoplasm. Non-structural protein implicated with protein sigma-NS in forming the matrix of viral factories, which are large inclusions in the host cytoplasm where replication intermediates are assembled and viral RNA replication takes place. Together with mu-2, recruits the other core proteins to these factories. The sequence is that of Protein mu-NS (M3) from Mammalia (T2J).